A 274-amino-acid polypeptide reads, in one-letter code: 2,3,4,5-tetrahydropyridine-2,6-dicarboxylate N-succinyltransferase (274 aa).

Residues arginine 104 and aspartate 141 each contribute to the substrate site.

Belongs to the transferase hexapeptide repeat family. Homotrimer.

It is found in the cytoplasm. It catalyses the reaction (S)-2,3,4,5-tetrahydrodipicolinate + succinyl-CoA + H2O = (S)-2-succinylamino-6-oxoheptanedioate + CoA. It functions in the pathway amino-acid biosynthesis; L-lysine biosynthesis via DAP pathway; LL-2,6-diaminopimelate from (S)-tetrahydrodipicolinate (succinylase route): step 1/3. This Shigella dysenteriae serotype 1 (strain Sd197) protein is 2,3,4,5-tetrahydropyridine-2,6-dicarboxylate N-succinyltransferase.